A 1862-amino-acid polypeptide reads, in one-letter code: MSQKSWIESTLTKRECVYIIPSSKDPHRCLPGCQICQQLVRCFCGRLVKQHACFTASLATKYSDVKLGEHFNQAIEEWSVEKHTEQSPTDAYGVINFQGGSHSYRAKYVRLSYDTKPEIILQLLLKEWQMELPKLVISVHGGMQKFELHPRIKQLLGKGLIKAAVTTGAWILTGGVNTGVAKHVGDALKEHASRSSRKICTIGIAPWGVIENRNDLVGRDVVAPYQTLLNPLSKLNVLNNLHSHFILVDDGTVGKYGAEVRLRRELEKTINQQRIHARIGQGVPVVALIFEGGPNVILTVLEYLQESPPVPVVVCEGTGRAADLLAYIHKQTEEGGNLPDAAEPDIISTIKKTFNFGQSEAVHLFQTMMECMKKKELITVFHIGSEDHQDIDVAILTALLKGTNASAFDQLILTLAWDRVDIAKNHVFVYGQQWLVGSLEQAMLDALVMDRVSFVKLLIENGVSMHKFLTIPRLEELYNTKQGPTNPMLFHLIRDVKQGNLPPGYKITLIDIGLVIEYLMGGTYRCTYTRKRFRLIYNSLGGNNRRSGRNASSSTPQLRKSHETFGNRADKKEKMRHNHFIKTAQPYRPKMDASMEEGKKKRTKDEIVDIDDPETKRFPYPLNELLIWACLMKRQVMARFLWQHGEESMAKALVACKIYRSMAYEAKQSDLVDDTSEELKQYSNDFGQLAVELLEQSFRQDETMAMKLLTYELKNWSNSTCLKLAVSSRLRPFVAHTCTQMLLSDMWMGRLNMRKNSWYKVILSILVPPAILMLEYKTKAEMSHIPQSQDAHQMTMEDSENNFHNITEEIPMEVFKEVKILDSSEGKNEMEIHIKSKKLPITRKFYAFYHAPIVKFWFNTLAYLGFLMLYTFVVLVQMEQLPSVQEWIVIAYIFTYAIEKIREVFMSEAGKISQKIKVWFSDYFNVSDTIAIISFFVGFGLRFGAKWNYINAYDNHVFVAGRLIYCLNIIFWYVRLLDFLAVNQQAGPYVMMIGKMVANMFYIVVIMALVLLSFGVPRKAILYPHEEPSWSLAKDIVFHPYWMIFGEVYAYEIDVCANDSALPTICGPGTWLTPFLQAVYLFVQYIIMVNLLIAFFNNVYLQVKAISNIVWKYQRYHFIMAYHEKPVLPPPLIILSHIVSLFCCICKRRKKDKTSDGPKLFLTEEDQKKLHDFEEQCVEMYFDEKDDKFNSGSEERIRVTFERVEQMSIQIKEVGDRVNYIKRSLQSLDSQIGHLQDLSALTVDTLKTLTAQKASEASKVHNEITRELSISKHLAQNLIDDVPVRPMWKKPSVVNTLSSSLPQGDRESNNPFLCNIFMKDEKDPQYNLFGQDLPVIPQRKEFNIPEAGSSCGALFPSAVSPPELRQRRHGVEMLKIFNKNQKLGSSPNSSPHMSSPPTKFSVSTPSQPSCKSHLESTTKDPEPIFYKAAEGDNIEFGAFVGHRDSMDLQRFKETSNKIRELLSNDTPENTLKHVGAAGYNECHKTPTSLHSEQESCSRRASTEDSPDVDSRAALLPDWLRDRPTNREMPSEGGTLNGLASPFKPVLDTNYYYSAVERNNLMRLSQSIPFVPVPPRGEPVTVYRLEESSPSILNNSMSSWSQLGLCAKIEFLSKEEMGGGLRRAVKVLCTWSEHDVLRSGHLYIIKSFLPEVINTWSSIYKEDTVLHLCLREIQQQRAAQKLTFAFNQMKPKSIPYSPRFLEVFLLYCHSAGQWFAVEECMTGEFRKYNNNNGDEIIPTNTLEEIMLAFSHWTYEYTRGELLVLDLQGVGENLTDPSVIKAEEKRSCDMVFGPANLGEDAIKNFRAKHHCNSCCRKLKLPDLKRNDYTPDKIIFPQDESSDLNLQAGNSTKESEATNSVRLML.

M1 is subject to N-acetylmethionine. The Cytoplasmic portion of the chain corresponds to 1 to 850 (MSQKSWIEST…ITRKFYAFYH (850 aa)). Position 101 is a phosphoserine (S101). A compositionally biased stretch (low complexity) spans 544–554 (NRRSGRNASSS). A disordered region spans residues 544 to 574 (NRRSGRNASSSTPQLRKSHETFGNRADKKEK). Residues 560–573 (KSHETFGNRADKKE) show a composition bias toward basic and acidic residues. Residues 851–876 (APIVKFWFNTLAYLGFLMLYTFVVLV) form a helical membrane-spanning segment. The Extracellular segment spans residues 877-882 (QMEQLP). A helical membrane pass occupies residues 883 to 904 (SVQEWIVIAYIFTYAIEKIREV). Over 905-923 (FMSEAGKISQKIKVWFSDY) the chain is Cytoplasmic. The chain crosses the membrane as a helical span at residues 924–943 (FNVSDTIAIISFFVGFGLRF). The Extracellular portion of the chain corresponds to 944 to 956 (GAKWNYINAYDNH). Residues 957–980 (VFVAGRLIYCLNIIFWYVRLLDFL) form a helical membrane-spanning segment. Residues 981–999 (AVNQQAGPYVMMIGKMVAN) are Cytoplasmic-facing. Residues 1000-1023 (MFYIVVIMALVLLSFGVPRKAILY) form a helical membrane-spanning segment. The Extracellular segment spans residues 1024-1025 (PH). The segment at residues 1026-1066 (EEPSWSLAKDIVFHPYWMIFGEVYAYEIDVCANDSALPTIC) is an intramembrane region (pore-forming). Residues 1067–1069 (GPG) lie on the Extracellular side of the membrane. A helical membrane pass occupies residues 1070–1098 (TWLTPFLQAVYLFVQYIIMVNLLIAFFNN). The Cytoplasmic segment spans residues 1099-1862 (VYLQVKAISN…EATNSVRLML (764 aa)). Residues C1143, C1144, and C1146 are each lipidated (S-palmitoyl cysteine). At T1163 the chain carries Phosphothreonine. Residues S1191, S1193, S1224, S1255, and S1258 each carry the phosphoserine modification. Residues 1198 to 1250 (RVTFERVEQMSIQIKEVGDRVNYIKRSLQSLDSQIGHLQDLSALTVDTLKTLT) are a coiled coil. At T1265 the chain carries Phosphothreonine. S1300, S1357, S1360, S1385, S1386, S1389, S1394, S1395, and S1403 each carry phosphoserine. The tract at residues 1380–1418 (NQKLGSSPNSSPHMSSPPTKFSVSTPSQPSCKSHLESTT) is disordered. Over residues 1385-1397 (SSPNSSPHMSSPP) the composition is skewed to low complexity. Positions 1398 to 1410 (TKFSVSTPSQPSC) are enriched in polar residues. At T1404 the chain carries Phosphothreonine. Residues S1406 and S1445 each carry the phosphoserine modification. T1454 is subject to Phosphothreonine. The residue at position 1455 (S1455) is a Phosphoserine. Residues T1466 and T1470 each carry the phosphothreonine modification. The disordered stretch occupies residues 1485–1511 (TPTSLHSEQESCSRRASTEDSPDVDSR). Phosphoserine is present on residues S1491, S1497, S1501, S1510, and S1530. Residues 1491 to 1502 (SEQESCSRRAST) show a composition bias toward basic and acidic residues. Position 1534 is a phosphothreonine (T1534). S1540 is modified (phosphoserine). T1548 carries the post-translational modification Phosphothreonine. Phosphoserine is present on residues S1564 and S1566. Position 1580 is a phosphothreonine (T1580). Positions 1591-1821 (ILNNSMSSWS…CCRKLKLPDL (231 aa)) constitute an Alpha-type protein kinase domain. 2 positions are modified to phosphoserine: S1595 and S1612. Residues G1618, G1619, L1620, R1621, and K1645 each coordinate ADP. Residue S1657 is modified to Phosphoserine. T1682 carries the phosphothreonine modification. ADP is bound by residues E1717, E1718, and M1720. Position 1750 (H1750) interacts with Zn(2+). Residue D1764 is the Proton acceptor of the active site. Position 1774 (D1774) interacts with ADP. S1776 is subject to Phosphoserine. Residues H1807, C1809, and C1813 each coordinate Zn(2+). T1827 is subject to Phosphothreonine. The interval 1840 to 1862 (DLNLQAGNSTKESEATNSVRLML) is disordered. Phosphoserine is present on residues S1848 and S1857.

In the C-terminal section; belongs to the protein kinase superfamily. Alpha-type protein kinase family. ALPK subfamily. It in the N-terminal section; belongs to the transient receptor (TC 1.A.4) family. LTrpC subfamily. TRPM7 sub-subfamily. Homodimer. Homotetramer. Forms heteromers with TRPM6; heteromeric channels are functionally different from the homomeric channels. Interacts with PLCB1. Requires Zn(2+) as cofactor. Palmitoylated; palmitoylation at Cys-1143, Cys-1144 and Cys-1146 promotes TRPM7 trafficking from the Golgi to the surface membrane. Post-translationally, autophosphorylated; autophosphorylation regulates TRPM7 kinase activity towards its substrates. In terms of processing, the C-terminal kinase domain can be cleaved from the channel segment in a cell-type-specific fashion. TRPM7 is cleaved by caspase-8, dissociating the kinase from the ion-conducting pore. The cleaved kinase fragments (M7CKs) can translocate to the cell nucleus and binds chromatin-remodeling complex proteins in a Zn(2+)-dependent manner to ultimately phosphorylate specific Ser/Thr residues of histones.

The protein localises to the cell membrane. It localises to the cytoplasmic vesicle membrane. Its subcellular location is the nucleus. It carries out the reaction L-seryl-[protein] + ATP = O-phospho-L-seryl-[protein] + ADP + H(+). It catalyses the reaction L-threonyl-[protein] + ATP = O-phospho-L-threonyl-[protein] + ADP + H(+). The catalysed reaction is Mg(2+)(in) = Mg(2+)(out). The enzyme catalyses Ca(2+)(in) = Ca(2+)(out). It carries out the reaction Zn(2+)(in) = Zn(2+)(out). Its activity is regulated as follows. Channel displays constitutive activity. Channel activity is negatively regulated by cytosolic Mg(2+), Mg-ATP, low intracellular pH. Resting free cytosolic Mg(2+) and Mg-ATP concentrations seem to be sufficient to block native TRPM7 channel activity. TRPM7 channel activity is highly dependent on membrane levels of phosphatidylinositol 4,5 bisphosphate (PIP2). PIP2 hydrolysis negatively regulates TRPM7 channel activity. TRPM7 kinase activity does not affect channel activity. The kinase activity is controlled through the autophosphorylation of a serine/threonine-rich region located N-terminal to the catalytic domain. Its function is as follows. Bifunctional protein that combines an ion channel with an intrinsic kinase domain, enabling it to modulate cellular functions either by conducting ions through the pore or by phosphorylating downstream proteins via its kinase domain. The channel is highly permeable to divalent cations, specifically calcium (Ca2+), magnesium (Mg2+) and zinc (Zn2+) and mediates their influx. Controls a wide range of biological processes such as Ca2(+), Mg(2+) and Zn(2+) homeostasis, vesicular Zn(2+) release channel and intracellular Ca(2+) signaling, embryonic development, immune responses, cell motility, proliferation and differentiation. The C-terminal alpha-kinase domain autophosphorylates cytoplasmic residues of TRPM7. TRPM7 phosphorylates SMAD2, suggesting that TRPM7 kinase may play a role in activating SMAD signaling pathways. In vitro, TRPM7 kinase phosphorylates ANXA1 (annexin A1), myosin II isoforms and a variety of proteins with diverse cellular functions. In terms of biological role, the cleaved channel exhibits substantially higher current and potentiates Fas receptor signaling. Functionally, the C-terminal kinase domain can be cleaved from the channel segment in a cell-type-specific fashion. In immune cells, the TRPM7 kinase domain is clipped from the channel domain by caspases in response to Fas-receptor stimulation. The cleaved kinase fragments can translocate to the nucleus, and bind chromatin-remodeling complex proteins in a Zn(2+)-dependent manner to ultimately phosphorylate specific Ser/Thr residues of histones known to be functionally important for cell differentiation and embryonic development. The sequence is that of Transient receptor potential cation channel subfamily M member 7 from Rattus norvegicus (Rat).